The chain runs to 1011 residues: Phosphoenolpyruvate carboxylase (1011 aa).

Residues H207 and K658 contribute to the active site.

It belongs to the PEPCase type 1 family. Mg(2+) serves as cofactor.

The enzyme catalyses oxaloacetate + phosphate = phosphoenolpyruvate + hydrogencarbonate. Its function is as follows. Forms oxaloacetate, a four-carbon dicarboxylic acid source for the tricarboxylic acid cycle. This is Phosphoenolpyruvate carboxylase (ppc) from Thermosynechococcus vestitus (strain NIES-2133 / IAM M-273 / BP-1).